A 265-amino-acid polypeptide reads, in one-letter code: GTP cyclohydrolase FolE2 (265 aa).

This sequence belongs to the GTP cyclohydrolase IV family.

The catalysed reaction is GTP + H2O = 7,8-dihydroneopterin 3'-triphosphate + formate + H(+). It functions in the pathway cofactor biosynthesis; 7,8-dihydroneopterin triphosphate biosynthesis; 7,8-dihydroneopterin triphosphate from GTP: step 1/1. Its function is as follows. Converts GTP to 7,8-dihydroneopterin triphosphate. This is GTP cyclohydrolase FolE2 from Magnetococcus marinus (strain ATCC BAA-1437 / JCM 17883 / MC-1).